The sequence spans 119 residues: Glucitol operon activator protein (119 aa).

The H-T-H motif DNA-binding region spans 23–29; that stretch reads QISRFNR.

Positive regulator for glucitol operon expression. This Escherichia coli (strain K12) protein is Glucitol operon activator protein (gutM).